A 393-amino-acid polypeptide reads, in one-letter code: Lipid-A-disaccharide synthase (393 aa).

It belongs to the LpxB family.

The catalysed reaction is a lipid X + a UDP-2-N,3-O-bis[(3R)-3-hydroxyacyl]-alpha-D-glucosamine = a lipid A disaccharide + UDP + H(+). It functions in the pathway bacterial outer membrane biogenesis; LPS lipid A biosynthesis. Functionally, condensation of UDP-2,3-diacylglucosamine and 2,3-diacylglucosamine-1-phosphate to form lipid A disaccharide, a precursor of lipid A, a phosphorylated glycolipid that anchors the lipopolysaccharide to the outer membrane of the cell. The polypeptide is Lipid-A-disaccharide synthase (Colwellia psychrerythraea (strain 34H / ATCC BAA-681) (Vibrio psychroerythus)).